Here is a 436-residue protein sequence, read N- to C-terminus: Testis-expressed protein 44 (436 aa).

2 stretches are compositionally biased toward acidic residues: residues 1–10 and 45–54; these read MTTEPLEDPE and LPDEVPPEDI. Disordered regions lie at residues 1–142 and 165–307; these read MTTE…LTSL and AENN…SLYG. Composition is skewed to polar residues over residues 81–103 and 167–195; these read ASMQ…TDTS and NNRT…TVSE. Basic and acidic residues predominate over residues 234–247; that stretch reads EPTKSADQEAEDFK. Over residues 273–289 the composition is skewed to pro residues; it reads QAPPSPNSPADSPPPSP. The residue at position 375 (Ser-375) is a Phosphoserine.

It localises to the cytoplasm. In Rattus norvegicus (Rat), this protein is Testis-expressed protein 44 (Tex44).